The sequence spans 635 residues: Threonine--tRNA ligase (635 aa).

The 61-residue stretch at 1–61 folds into the TGS domain; the sequence is MVSIRLPDGS…DRDASLAIVT (61 aa). A catalytic region spans residues 242–533; it reads DHRKLGKQLD…LIEHHAGAMP (292 aa). Residues cysteine 333, histidine 384, and histidine 510 each coordinate Zn(2+).

Belongs to the class-II aminoacyl-tRNA synthetase family. In terms of assembly, homodimer. The cofactor is Zn(2+).

Its subcellular location is the cytoplasm. The enzyme catalyses tRNA(Thr) + L-threonine + ATP = L-threonyl-tRNA(Thr) + AMP + diphosphate + H(+). Functionally, catalyzes the attachment of threonine to tRNA(Thr) in a two-step reaction: L-threonine is first activated by ATP to form Thr-AMP and then transferred to the acceptor end of tRNA(Thr). Also edits incorrectly charged L-seryl-tRNA(Thr). This chain is Threonine--tRNA ligase, found in Burkholderia cenocepacia (strain ATCC BAA-245 / DSM 16553 / LMG 16656 / NCTC 13227 / J2315 / CF5610) (Burkholderia cepacia (strain J2315)).